The primary structure comprises 134 residues: Transcription antitermination protein NusB (134 aa).

It belongs to the NusB family.

In terms of biological role, involved in transcription antitermination. Required for transcription of ribosomal RNA (rRNA) genes. Binds specifically to the boxA antiterminator sequence of the ribosomal RNA (rrn) operons. The sequence is that of Transcription antitermination protein NusB from Shewanella woodyi (strain ATCC 51908 / MS32).